The primary structure comprises 762 residues: Probable inorganic carbon transporter subunit DabA (762 aa).

Residues Cys-279, Asp-281, His-461, and Cys-476 each contribute to the Zn(2+) site.

Belongs to the inorganic carbon transporter (TC 9.A.2) DabA family. Forms a complex with DabB. The cofactor is Zn(2+).

It localises to the cell inner membrane. Part of an energy-coupled inorganic carbon pump. The polypeptide is Probable inorganic carbon transporter subunit DabA (Legionella pneumophila subsp. pneumophila (strain Philadelphia 1 / ATCC 33152 / DSM 7513)).